The sequence spans 430 residues: Tol-Pal system protein TolB (430 aa).

A signal peptide spans 1–21 (MKQALRVAFGFLILWASVLHA).

Belongs to the TolB family. In terms of assembly, the Tol-Pal system is composed of five core proteins: the inner membrane proteins TolA, TolQ and TolR, the periplasmic protein TolB and the outer membrane protein Pal. They form a network linking the inner and outer membranes and the peptidoglycan layer.

The protein localises to the periplasm. In terms of biological role, part of the Tol-Pal system, which plays a role in outer membrane invagination during cell division and is important for maintaining outer membrane integrity. TolB occupies a key intermediary position in the Tol-Pal system because it communicates directly with both membrane-embedded components, Pal in the outer membrane and TolA in the inner membrane. This Escherichia coli O139:H28 (strain E24377A / ETEC) protein is Tol-Pal system protein TolB.